We begin with the raw amino-acid sequence, 205 residues long: Thymidylate kinase (205 aa).

10–17 contributes to the ATP binding site; the sequence is GIDGAGKS.

The protein belongs to the thymidylate kinase family.

It carries out the reaction dTMP + ATP = dTDP + ADP. Functionally, phosphorylation of dTMP to form dTDP in both de novo and salvage pathways of dTTP synthesis. This is Thymidylate kinase from Ralstonia nicotianae (strain ATCC BAA-1114 / GMI1000) (Ralstonia solanacearum).